The sequence spans 87 residues: Exendin-3 (87 aa).

An N-terminal signal peptide occupies residues 1–21 (MKIILWLCVFGLFLATLFPVS). A propeptide spanning residues 22-45 (WQMPVESGLSSEDSASSESFASKI) is cleaved from the precursor. At S86 the chain carries Serine amide.

It belongs to the glucagon family. As to expression, expressed by the venom gland.

It localises to the secreted. Functionally, stimulates vasoactive intestinal peptide (VIP) receptors in high concentrations (&gt;100 nM), resulting in both an increase in cAMP and amylase secretion from pancreatic acini, although at low concentrations (between 0.3 and 3 nM) it increases cAMP without stimulating amylase release. Stimulates the GLP-1 receptor (GLP1R). Induces hypotension that is mediated by relaxation of cardiac smooth muscle. The chain is Exendin-3 from Heloderma horridum horridum (Mexican beaded lizard).